The chain runs to 267 residues: Putative [LysW]-aminoadipate/[LysW]-glutamate kinase (267 aa).

Substrate is bound by residues 37 to 38, R64, and N169; that span reads GG.

This sequence belongs to the acetylglutamate kinase family. LysZ subfamily.

Its subcellular location is the cytoplasm. It catalyses the reaction [amino-group carrier protein]-C-terminal-N-(1,4-dicarboxybutan-1-yl)-L-glutamine + ATP = [amino-group carrier protein]-C-terminal-N-(1-carboxy-5-phosphooxy-5-oxopentan-1-yl)-L-glutamine + ADP. The catalysed reaction is [amino-group carrier protein]-C-terminal-gamma-(L-glutamyl)-L-glutamate + ATP = [amino-group carrier protein]-C-terminal-gamma-(5-phospho-L-glutamyl)-L-glutamate + ADP. The protein operates within amino-acid biosynthesis; L-lysine biosynthesis via AAA pathway; L-lysine from L-alpha-aminoadipate (Thermus route): step 2/5. It participates in amino-acid biosynthesis; L-arginine biosynthesis. In terms of biological role, involved in both the arginine and lysine biosynthetic pathways. Phosphorylates the LysW-bound precursors glutamate (for arginine biosynthesis), respectively alpha-aminoadipate (for lysine biosynthesis). This is Putative [LysW]-aminoadipate/[LysW]-glutamate kinase from Nitrosopumilus maritimus (strain SCM1).